The sequence spans 89 residues: Small ribosomal subunit protein bS20 (89 aa).

It belongs to the bacterial ribosomal protein bS20 family.

Binds directly to 16S ribosomal RNA. This Helicobacter pylori (strain Shi470) protein is Small ribosomal subunit protein bS20.